The following is a 347-amino-acid chain: GMP reductase (347 aa).

108-131 (ADFEKTVQILALNPALNFVCIDVA) provides a ligand contact to NADP(+). Positions 181 and 183 each coordinate K(+). The Thioimidate intermediate role is filled by C186. 216-239 (IVSDGGCTMPGDVAKAFGGGADFV) is a binding site for NADP(+).

The protein belongs to the IMPDH/GMPR family. GuaC type 1 subfamily. As to quaternary structure, homotetramer.

It catalyses the reaction IMP + NH4(+) + NADP(+) = GMP + NADPH + 2 H(+). In terms of biological role, catalyzes the irreversible NADPH-dependent deamination of GMP to IMP. It functions in the conversion of nucleobase, nucleoside and nucleotide derivatives of G to A nucleotides, and in maintaining the intracellular balance of A and G nucleotides. This chain is GMP reductase, found in Salmonella paratyphi A (strain ATCC 9150 / SARB42).